The primary structure comprises 427 residues: Gamma-glutamyl phosphate reductase (427 aa).

This sequence belongs to the gamma-glutamyl phosphate reductase family.

It is found in the cytoplasm. It catalyses the reaction L-glutamate 5-semialdehyde + phosphate + NADP(+) = L-glutamyl 5-phosphate + NADPH + H(+). The protein operates within amino-acid biosynthesis; L-proline biosynthesis; L-glutamate 5-semialdehyde from L-glutamate: step 2/2. Functionally, catalyzes the NADPH-dependent reduction of L-glutamate 5-phosphate into L-glutamate 5-semialdehyde and phosphate. The product spontaneously undergoes cyclization to form 1-pyrroline-5-carboxylate. The polypeptide is Gamma-glutamyl phosphate reductase (Brucella canis (strain ATCC 23365 / NCTC 10854 / RM-666)).